A 227-amino-acid polypeptide reads, in one-letter code: Cytidylate kinase (227 aa).

An ATP-binding site is contributed by 10–18 (GPSGSGKGT).

The protein belongs to the cytidylate kinase family. Type 1 subfamily.

The protein resides in the cytoplasm. It catalyses the reaction CMP + ATP = CDP + ADP. The enzyme catalyses dCMP + ATP = dCDP + ADP. This is Cytidylate kinase from Acinetobacter baylyi (strain ATCC 33305 / BD413 / ADP1).